The primary structure comprises 527 residues: Catalase (527 aa).

Ala-2 is modified (N-acetylalanine). Ser-9 carries the phosphoserine modification. Position 13 is an N6-succinyllysine (Lys-13). Residues His-75 and Asn-148 contribute to the active site. The NADP(+) site is built by His-194, Ser-201, Arg-203, and Asn-213. Lys-221 is subject to N6-succinyllysine. Lys-233 is subject to N6-acetyllysine. Residues Lys-237, Trp-303, His-305, and Lys-306 each coordinate NADP(+). Lys-306 carries the N6-acetyllysine; alternate modification. Lys-306 carries the post-translational modification N6-succinyllysine; alternate. Residue Tyr-358 participates in heme binding. Residues Ser-417 and Ser-422 each carry the phosphoserine modification. Position 480 is an N6-acetyllysine; alternate (Lys-480). Lys-480 bears the N6-succinyllysine; alternate mark. At Lys-499 the chain carries N6-acetyllysine. Phosphothreonine is present on Thr-511. Ser-515 and Ser-517 each carry phosphoserine. The short motif at 524-527 (KANL) is the Microbody targeting signal; atypical element.

Belongs to the catalase family. In terms of assembly, homotetramer. Interacts (via microbody targeting signal) with PEX5, monomeric form interacts with PEX5, leading to its translocation into peroxisomes. Heme serves as cofactor. The cofactor is NADP(+).

It is found in the peroxisome matrix. It carries out the reaction 2 H2O2 = O2 + 2 H2O. In terms of biological role, catalyzes the degradation of hydrogen peroxide (H(2)O(2)) generated by peroxisomal oxidases to water and oxygen, thereby protecting cells from the toxic effects of hydrogen peroxide. Promotes growth of cells including T-cells, B-cells, myeloid leukemia cells, melanoma cells, mastocytoma cells and normal and transformed fibroblast cells. This chain is Catalase (CAT), found in Pongo abelii (Sumatran orangutan).